The primary structure comprises 595 residues: Apolipoprotein N-acyltransferase 2 (595 aa).

The next 5 membrane-spanning stretches (helical) occupy residues 30-50, 63-83, 95-115, 167-187, and 210-230; these read FLAFAPVSLTHFVWIAPFGFF, LFFHGLLIGVVFYAISFHWII, VVAILILLFAGLLFGLKFPIF, AEITGVYGISFLVFIVSYTLF, and FITLPALLLLTFIVSGIFLFK. Residues 241 to 555 enclose the CN hydrolase domain; it reads LNVLIVQPDA…AEALSETIDV (315 aa). The Proton acceptor role is filled by Glu293. Residue Lys372 is part of the active site. Cys463 (nucleophile) is an active-site residue. A helical membrane pass occupies residues 569-589; the sequence is LIPWLMLFLTGIYYLNLLIGI.

It belongs to the CN hydrolase family. Apolipoprotein N-acyltransferase subfamily.

It localises to the cell inner membrane. It catalyses the reaction N-terminal S-1,2-diacyl-sn-glyceryl-L-cysteinyl-[lipoprotein] + a glycerophospholipid = N-acyl-S-1,2-diacyl-sn-glyceryl-L-cysteinyl-[lipoprotein] + a 2-acyl-sn-glycero-3-phospholipid + H(+). It functions in the pathway protein modification; lipoprotein biosynthesis (N-acyl transfer). Catalyzes the phospholipid dependent N-acylation of the N-terminal cysteine of apolipoprotein, the last step in lipoprotein maturation. The chain is Apolipoprotein N-acyltransferase 2 from Leptospira interrogans serogroup Icterohaemorrhagiae serovar copenhageni (strain Fiocruz L1-130).